The chain runs to 115 residues: Large ribosomal subunit protein uL24 (115 aa).

Disordered stretches follow at residues 45–77 (VRQS…STGK) and 96–115 (KASG…KAAS).

This sequence belongs to the universal ribosomal protein uL24 family. Part of the 50S ribosomal subunit.

Functionally, one of two assembly initiator proteins, it binds directly to the 5'-end of the 23S rRNA, where it nucleates assembly of the 50S subunit. In terms of biological role, one of the proteins that surrounds the polypeptide exit tunnel on the outside of the subunit. The polypeptide is Large ribosomal subunit protein uL24 (Rhodopirellula baltica (strain DSM 10527 / NCIMB 13988 / SH1)).